The chain runs to 130 residues: MNFNDIETMVKSKFKDIKKHAEEIAHEIEVRSGYLRKAEQYKRLEFNLSFALDDIESTAKDVQTAKTSANKDSVTVKGKAPNTLYIEKRNLMKQKLEMLGEDIDKNKESLQKAKEIAGEKASEYFNKAMN.

It belongs to the EsxC family.

The protein localises to the secreted. This is ESAT-6 secretion system extracellular protein C from Staphylococcus aureus (strain MSSA476).